Here is a 199-residue protein sequence, read N- to C-terminus: Dephospho-CoA kinase (199 aa).

In terms of domain architecture, DPCK spans 3-199; that stretch reads TLGVTGGIGS…ELYWAVTGGQ (197 aa). Position 11–16 (11–16) interacts with ATP; it reads GSGKTT.

The protein belongs to the CoaE family.

Its subcellular location is the cytoplasm. It carries out the reaction 3'-dephospho-CoA + ATP = ADP + CoA + H(+). It functions in the pathway cofactor biosynthesis; coenzyme A biosynthesis; CoA from (R)-pantothenate: step 5/5. Its function is as follows. Catalyzes the phosphorylation of the 3'-hydroxyl group of dephosphocoenzyme A to form coenzyme A. This is Dephospho-CoA kinase from Salinibacter ruber (strain DSM 13855 / M31).